We begin with the raw amino-acid sequence, 220 residues long: Putative pyrophosphatase PpaX (220 aa).

Aspartate 9 functions as the Nucleophile in the catalytic mechanism.

This sequence belongs to the HAD-like hydrolase superfamily. PpaX family. Mg(2+) serves as cofactor.

It catalyses the reaction diphosphate + H2O = 2 phosphate + H(+). The protein is Putative pyrophosphatase PpaX of Caldanaerobacter subterraneus subsp. tengcongensis (strain DSM 15242 / JCM 11007 / NBRC 100824 / MB4) (Thermoanaerobacter tengcongensis).